A 445-amino-acid chain; its full sequence is UDP-N-acetylmuramate--L-alanine ligase (445 aa).

113–119 (GSHGKTS) is a binding site for ATP.

It belongs to the MurCDEF family.

The protein localises to the cytoplasm. The catalysed reaction is UDP-N-acetyl-alpha-D-muramate + L-alanine + ATP = UDP-N-acetyl-alpha-D-muramoyl-L-alanine + ADP + phosphate + H(+). Its pathway is cell wall biogenesis; peptidoglycan biosynthesis. In terms of biological role, cell wall formation. In Enterococcus faecalis (strain ATCC 700802 / V583), this protein is UDP-N-acetylmuramate--L-alanine ligase.